The primary structure comprises 562 residues: MRIFLVSVILINACWAGPIVETNYGKVEGIEYEGAEVFLAIPFAKPPVDDLRFEKPVAPDPWEDVYPATQYRNDCTPHYRLVAQFSSYSGEDCLTLNIIKPKKAEKLPVLFWIHGGGYEIGSASQHGYEFFAKRYASQGVIVATVQYRLGFMGFFSEGTSDVQGNWGLFDQAAALEFVKSNIENFGGDPNQITIWGYSAGAASVSQLTMSPYTRDSYSKAIIMSASSFVGWATGPNVVETSKQLAEILGCPWPGAKECMKKKSLHEIFDAIEVQGWTTGTIDILRWSPVIDGDFMTKNPEELIKESPVKPTLIGMSNKEGSYFAALNMGRVIADFGLSPEDMPKVDEEFISEIIGRKLLYNNRYGENREKVWNDILDFYVKQGKPAEVKDLNGFYVDRYSELLSDITFNVPILREITSRVERKTPVWTYRMDHYDKNIWKKHIPEQARGSPHANEYHYLFDMPVMAKIDMKKEPDSWIQNDLIDMVISFAKTGVPQIEDVEWRPVSDPDDVNFLNIRSDGVSIEHGLFQEPLAFWNELRQREGFDLIDPTNSAMHSSNKDEL.

The signal sequence occupies residues 1–16 (MRIFLVSVILINACWA). The N-linked (GlcNAc...) asparagine; atypical glycan is linked to asparagine 73. Cysteine 75 and cysteine 93 are joined by a disulfide. Serine 198 acts as the Acyl-ester intermediate in catalysis. An intrachain disulfide couples cysteine 250 to cysteine 258. Active-site charge relay system residues include glutamate 319 and histidine 452. The Prevents secretion from ER motif lies at 559-562 (KDEL).

This sequence belongs to the type-B carboxylesterase/lipase family. As to expression, expressed only in the intestine.

Its subcellular location is the endoplasmic reticulum lumen. The enzyme catalyses a carboxylic ester + H2O = an alcohol + a carboxylate + H(+). This Caenorhabditis elegans protein is Gut esterase 1 (ges-1).